A 565-amino-acid polypeptide reads, in one-letter code: Arginine--tRNA ligase (565 aa).

The 'HIGH' region signature appears at 120–130 (PNIAKPFHVGH).

Belongs to the class-I aminoacyl-tRNA synthetase family. As to quaternary structure, monomer.

The protein resides in the cytoplasm. The enzyme catalyses tRNA(Arg) + L-arginine + ATP = L-arginyl-tRNA(Arg) + AMP + diphosphate. The chain is Arginine--tRNA ligase from Clostridium perfringens (strain 13 / Type A).